The sequence spans 407 residues: Nuclear hormone receptor family member nhr-86 (407 aa).

The segment at residues 21–96 (KSTCSICRED…VGMNPAGVQQ (76 aa)) is a DNA-binding region (nuclear receptor). NR C4-type zinc fingers lie at residues 24–44 (CSIC…CRAC) and 60–79 (CRGN…CRSC). Residues 130–405 (AQSALVEDLH…KDFYDLVNGK (276 aa)) form the NR LBD domain. The segment at 394–405 (PPKDFYDLVNGK) is AF-2.

Belongs to the nuclear hormone receptor family. As to expression, expressed in intestinal epithelial cells, excretory gland cells and in several head neurons.

The protein localises to the nucleus. Nuclear receptor which acts as a transcription activator. Binds small molecule ligands, such as phenazine 1-carboxamide (PCN), a pathogen-derived metabolite, leading to modulation of innate immune responses against virulent pathogens. On exposure to exogenous PCN, P.aeruginosa and other xenobiotic immunostimulant such as R24, activates immune response genes, including irg-4, irg-5, mul-1, drd-50, cyp-35C1 and ugt-30, probably via direct interaction with their promoters, and independent of the p38 MAPK pmk-1 pathway. Exhibits higher affinity to R24 than PCN and thus induces stronger immune response. Binds its own promoter thereby autoregulating its expression in the head hypodermis and the pharynx. Possibly plays a role in lipid storage or catabolism. In Caenorhabditis elegans, this protein is Nuclear hormone receptor family member nhr-86 (nhr-86).